The following is a 374-amino-acid chain: 4-hydroxy-3-methylbut-2-en-1-yl diphosphate synthase (flavodoxin) (374 aa).

Cysteine 270, cysteine 273, cysteine 305, and glutamate 312 together coordinate [4Fe-4S] cluster.

Belongs to the IspG family. Requires [4Fe-4S] cluster as cofactor.

It carries out the reaction (2E)-4-hydroxy-3-methylbut-2-enyl diphosphate + oxidized [flavodoxin] + H2O + 2 H(+) = 2-C-methyl-D-erythritol 2,4-cyclic diphosphate + reduced [flavodoxin]. It functions in the pathway isoprenoid biosynthesis; isopentenyl diphosphate biosynthesis via DXP pathway; isopentenyl diphosphate from 1-deoxy-D-xylulose 5-phosphate: step 5/6. In terms of biological role, converts 2C-methyl-D-erythritol 2,4-cyclodiphosphate (ME-2,4cPP) into 1-hydroxy-2-methyl-2-(E)-butenyl 4-diphosphate. The protein is 4-hydroxy-3-methylbut-2-en-1-yl diphosphate synthase (flavodoxin) of Yersinia enterocolitica serotype O:8 / biotype 1B (strain NCTC 13174 / 8081).